Here is a 287-residue protein sequence, read N- to C-terminus: Rhodopsin (287 aa).

Residues 1 to 5 (VNGAA) lie on the Extracellular side of the membrane. The helical transmembrane segment at 6–30 (YAGLCAYMFLLILVGFPVNFLTLYV) threads the bilayer. At 31 to 42 (TLEHKKLRTPLN) the chain is on the cytoplasmic side. A helical transmembrane segment spans residues 43 to 65 (YILLNLAVADLFMVLGGFTTTMY). Topologically, residues 66-79 (TSAHGYFVLGRLGC) are extracellular. A disulfide bond links C79 and C156. Residues 80–102 (NVEGFFATLGGEIALWSLVVLAV) form a helical membrane-spanning segment. Positions 103–105 (ERW) match the 'Ionic lock' involved in activated form stabilization motif. The Cytoplasmic segment spans residues 103–121 (ERWIVVCKPISNFRFTEEH). The helical transmembrane segment at 122–142 (AIMGLGFNWVMASACAVPPLV) threads the bilayer. At 143 to 171 (GWSRYIPEGMQCSCGINYYTRSEGFNNES) the chain is on the extracellular side. The N-linked (GlcNAc...) asparagine glycan is linked to N169. A helical membrane pass occupies residues 172–193 (LVMKMLICHFLIPLFVIFFCYG). At 194 to 221 (RMLCAVKEAAAAQQESETTQRAEREVSR) the chain is on the cytoplasmic side. A helical transmembrane segment spans residues 222 to 243 (MVVIMVISFLVCWLPYASVAWY). Residues 244–255 (IFCNQGSEFGPV) lie on the Extracellular side of the membrane. The chain crosses the membrane as a helical span at residues 256–277 (FMTLPAFFAKSASIYNPLIYIC). K265 carries the post-translational modification N6-(retinylidene)lysine. Over 278–287 (MNKHSRHCMI) the chain is Cytoplasmic.

The protein belongs to the G-protein coupled receptor 1 family. Opsin subfamily. In terms of processing, phosphorylated on some or all of the serine and threonine residues present in the C-terminal region. Post-translationally, contains one covalently linked retinal chromophore.

The protein resides in the membrane. It localises to the cell projection. It is found in the cilium. The protein localises to the photoreceptor outer segment. Its function is as follows. Photoreceptor required for image-forming vision at low light intensity. While most salt water fish species use retinal as chromophore, most freshwater fish use 3-dehydroretinal, or a mixture of retinal and 3-dehydroretinal. Light-induced isomerization of 11-cis to all-trans retinal triggers a conformational change that activates signaling via G-proteins. Subsequent receptor phosphorylation mediates displacement of the bound G-protein alpha subunit by arrestin and terminates signaling. In Taurulus bubalis (Long-spined sea scorpion), this protein is Rhodopsin (rho).